Here is a 439-residue protein sequence, read N- to C-terminus: Mitochondrial distribution and morphology protein 12 (439 aa).

The SMP-LTD domain occupies 1–439 (MSIDINWEAA…VYPSFWTFLV (439 aa)). The segment covering 71-84 (EEDEGDEDFSDDQD) has biased composition (acidic residues). Disordered stretches follow at residues 71–104 (EEDEGDEDFSDDQDGAPKHPPTIATERSGAGTWQ), 182–278 (TPLA…HEKK), and 362–385 (YIPGINPIGGGASGGAASSRRRDD). Residues 212 to 229 (DYPRPVHRQTDTDIDSGH) are compositionally biased toward basic and acidic residues. Residues 230–255 (SRPSTADTLNSINSQRISNPALSHPH) are compositionally biased toward polar residues. Residues 256–269 (SSNESHPDTRDHSP) show a composition bias toward basic and acidic residues.

Belongs to the MDM12 family. As to quaternary structure, component of the ER-mitochondria encounter structure (ERMES) or MDM complex, composed of MMM1, MDM10, MDM12 and MDM34. An MMM1 homodimer associates with one molecule of MDM12 on each side in a pairwise head-to-tail manner, and the SMP-LTD domains of MMM1 and MDM12 generate a continuous hydrophobic tunnel for phospholipid trafficking.

It is found in the mitochondrion outer membrane. It localises to the endoplasmic reticulum membrane. Component of the ERMES/MDM complex, which serves as a molecular tether to connect the endoplasmic reticulum (ER) and mitochondria. Components of this complex are involved in the control of mitochondrial shape and protein biogenesis, and function in nonvesicular lipid trafficking between the ER and mitochondria. MDM12 is required for the interaction of the ER-resident membrane protein MMM1 and the outer mitochondrial membrane-resident beta-barrel protein MDM10. The MDM12-MMM1 subcomplex functions in the major beta-barrel assembly pathway that is responsible for biogenesis of all mitochondrial outer membrane beta-barrel proteins, and acts in a late step after the SAM complex. The MDM10-MDM12-MMM1 subcomplex further acts in the TOM40-specific pathway after the action of the MDM12-MMM1 complex. Essential for establishing and maintaining the structure of mitochondria and maintenance of mtDNA nucleoids. The chain is Mitochondrial distribution and morphology protein 12 from Uncinocarpus reesii (strain UAMH 1704).